The following is a 1142-amino-acid chain: ABC transporter F family member 4 (1142 aa).

A disordered region spans residues M1–K564. 3 stretches are compositionally biased toward low complexity: residues P121–Q143, P153–K166, and P182–K195. Acidic residues-rich tracts occupy residues S203 to V212 and E233 to E244. Basic residues-rich tracts occupy residues K249–K261 and K280–S290. Over residues E295–E306 the composition is skewed to acidic residues. A compositionally biased stretch (basic and acidic residues) spans N314 to E328. Residues E329–E340 are compositionally biased toward acidic residues. Over residues K377–S387 the composition is skewed to basic residues. Composition is skewed to acidic residues over residues E392 to E404 and E441 to E451. Residues S456–K467 are compositionally biased toward basic residues. Positions E471 to E480 are enriched in acidic residues. The segment covering S485–S496 has biased composition (basic residues). A compositionally biased stretch (acidic residues) spans E501–E518. Residues A530–K548 are compositionally biased toward basic residues. 2 consecutive ABC transporter domains span residues I604–E857 and L923–V1139. ATP-binding positions include G636–S643 and G956–S963.

The protein belongs to the ABC transporter superfamily.

The chain is ABC transporter F family member 4 (abcF4) from Dictyostelium discoideum (Social amoeba).